A 388-amino-acid polypeptide reads, in one-letter code: Galactokinase (388 aa).

33–36 (EHTD) lines the substrate pocket. ATP-binding positions include Ser67 and 125-131 (GAGLSSS). Mg(2+) contacts are provided by Ser131 and Glu163. Asp175 (proton acceptor) is an active-site residue. Position 225 (Tyr225) interacts with substrate.

Belongs to the GHMP kinase family. GalK subfamily.

It localises to the cytoplasm. It carries out the reaction alpha-D-galactose + ATP = alpha-D-galactose 1-phosphate + ADP + H(+). It functions in the pathway carbohydrate metabolism; galactose metabolism. In terms of biological role, catalyzes the transfer of the gamma-phosphate of ATP to D-galactose to form alpha-D-galactose-1-phosphate (Gal-1-P). This is Galactokinase from Limosilactobacillus fermentum (strain NBRC 3956 / LMG 18251) (Lactobacillus fermentum).